The primary structure comprises 280 residues: Large ribosomal subunit protein uL2 (280 aa).

Disordered stretches follow at residues 32 to 54 (SLLVPNKSTGGRNNNGRVTSRHM) and 221 to 280 (RGMA…DSKK). Polar residues predominate over residues 37–49 (NKSTGGRNNNGRV). Residues 232-242 (MGGGEGKSKSG) are compositionally biased toward gly residues. Over residues 257–280 (KGLKTRKRKKASSKLIVRRRDSKK) the composition is skewed to basic residues.

This sequence belongs to the universal ribosomal protein uL2 family. Part of the 50S ribosomal subunit. Forms a bridge to the 30S subunit in the 70S ribosome.

Functionally, one of the primary rRNA binding proteins. Required for association of the 30S and 50S subunits to form the 70S ribosome, for tRNA binding and peptide bond formation. It has been suggested to have peptidyltransferase activity; this is somewhat controversial. Makes several contacts with the 16S rRNA in the 70S ribosome. This Chloroherpeton thalassium (strain ATCC 35110 / GB-78) protein is Large ribosomal subunit protein uL2.